A 225-amino-acid chain; its full sequence is Putative N-acetylmannosamine-6-phosphate 2-epimerase (225 aa).

This sequence belongs to the NanE family.

The catalysed reaction is an N-acyl-D-glucosamine 6-phosphate = an N-acyl-D-mannosamine 6-phosphate. The protein operates within amino-sugar metabolism; N-acetylneuraminate degradation; D-fructose 6-phosphate from N-acetylneuraminate: step 3/5. Functionally, converts N-acetylmannosamine-6-phosphate (ManNAc-6-P) to N-acetylglucosamine-6-phosphate (GlcNAc-6-P). The polypeptide is Putative N-acetylmannosamine-6-phosphate 2-epimerase (Vibrio vulnificus (strain CMCP6)).